The chain runs to 465 residues: Antithrombin-III (465 aa).

The first 32 residues, 1-32, serve as a signal peptide directing secretion; the sequence is MISNGIGTVTAGKRSICLLPLLLIGLWGCVTC. Cystine bridges form between cysteine 41-cysteine 161 and cysteine 54-cysteine 128. The residue at position 64 (threonine 64) is a Phosphothreonine. The residue at position 69 (serine 69) is a Phosphoserine. Tryptophan 82 contributes to the heparin binding site. Asparagine 129 carries N-linked (GlcNAc...) asparagine glycosylation. Heparin is bound at residue arginine 162. Residue asparagine 168 is glycosylated (N-linked (GlcNAc...) asparagine). Arginine 178 lines the heparin pocket. 2 N-linked (GlcNAc...) asparagine glycosylation sites follow: asparagine 188 and asparagine 225. Cysteine 280 and cysteine 463 form a disulfide bridge.

The protein belongs to the serpin family. In terms of assembly, forms protease inhibiting heterodimer with TMPRSS7. Post-translationally, phosphorylated by FAM20C in the extracellular medium. In terms of tissue distribution, plasma.

It is found in the secreted. Its subcellular location is the extracellular space. Its function is as follows. Most important serine protease inhibitor in plasma that regulates the blood coagulation cascade. AT-III inhibits thrombin, matriptase-3/TMPRSS7, as well as factors IXa, Xa and XIa. Its inhibitory activity is greatly enhanced in the presence of heparin. This Bos taurus (Bovine) protein is Antithrombin-III (SERPINC1).